Reading from the N-terminus, the 423-residue chain is Glucose-1-phosphate adenylyltransferase (423 aa).

Alpha-D-glucose 1-phosphate is bound by residues Tyr98, Gly163, 178-179 (EK), and Ser189.

This sequence belongs to the bacterial/plant glucose-1-phosphate adenylyltransferase family. In terms of assembly, homotetramer.

The catalysed reaction is alpha-D-glucose 1-phosphate + ATP + H(+) = ADP-alpha-D-glucose + diphosphate. It participates in glycan biosynthesis; glycogen biosynthesis. Involved in the biosynthesis of ADP-glucose, a building block required for the elongation reactions to produce glycogen. Catalyzes the reaction between ATP and alpha-D-glucose 1-phosphate (G1P) to produce pyrophosphate and ADP-Glc. The sequence is that of Glucose-1-phosphate adenylyltransferase from Thermotoga maritima (strain ATCC 43589 / DSM 3109 / JCM 10099 / NBRC 100826 / MSB8).